The primary structure comprises 139 residues: Putative lipoprotein LpqV (139 aa).

The N-terminal stretch at 1–25 (MRPSRYAPLLCAMVLALAWLSAVAG) is a signal peptide. C26 carries N-palmitoyl cysteine lipidation. The S-diacylglycerol cysteine moiety is linked to residue C26.

It is found in the cell membrane. The chain is Putative lipoprotein LpqV (lpqV) from Mycobacterium bovis (strain ATCC BAA-935 / AF2122/97).